We begin with the raw amino-acid sequence, 461 residues long: MQYALTVIFQSILFVQCQVGEAAFVISQEHEVSKSISINMTLFPSIKWIIHKSFYLYLTYFVMSQQTLPCFQAADSYNYSHSLPKVQFARFSKYTPQSISYSSTQMYQQKEYSDHITEMTNVHKSRKRKLMVTEDQWGSQITIPKVIQNRPLIEKWFVQKRFKMVKVRNIQRPQLSYQLLSALTCLNSPDGMISTTEIYSFILHHWRYYRYANENWKNSVRHVLCKCQLFDVLQVEGLSRKGNVYKLKRPDNVEKEMIDVKTLGCMQKDSRGIDFYIKMLAGQIGLPRHLFYSIVGNEMPEYAGPENSAIFYHLLSMRKIIPKLETRYFLEHWQMEHKATEPMFFEEFVPYSTSLVSCVENISSYGEGVGPGNDELYDLSDRQIICFHKNIRAYHSLQKRCHKMNYSNWMTPSLIYVQEAVMDKEIVEDDIRNGTIECEGVARKEEAKKNFQDPALISIYN.

The fork-head DNA-binding region spans 171-262 (QRPQLSYQLL…VEKEMIDVKT (92 aa)).

The protein resides in the nucleus. Transcription factor. Binds to DNA sequence motif 5'-CTGTTTCA-3'. Regulates expression of a class of small RNAs, known as 21U-RNAs, perhaps acting redundantly with fkh-4 and fkh-3. The polypeptide is Putative forkhead-related transcription factor fkh-5 (fkh-5) (Caenorhabditis elegans).